Here is a 360-residue protein sequence, read N- to C-terminus: Dihydroorotate dehydrogenase (quinone) (360 aa).

Residues 60-64 and Thr84 each bind FMN; that span reads AGFDK. Position 64 (Lys64) interacts with substrate. 109–113 is a binding site for substrate; the sequence is NRMGF. 2 residues coordinate FMN: Asn137 and Asn168. Asn168 is a substrate binding site. Ser171 functions as the Nucleophile in the catalytic mechanism. Asn173 contributes to the substrate binding site. FMN-binding residues include Lys213 and Ser241. 242–243 contacts substrate; the sequence is NT. FMN-binding positions include Gly264, Gly293, and 314–315; that span reads YS.

The protein belongs to the dihydroorotate dehydrogenase family. Type 2 subfamily. In terms of assembly, monomer. The cofactor is FMN.

Its subcellular location is the cell membrane. The enzyme catalyses (S)-dihydroorotate + a quinone = orotate + a quinol. Its pathway is pyrimidine metabolism; UMP biosynthesis via de novo pathway; orotate from (S)-dihydroorotate (quinone route): step 1/1. Its function is as follows. Catalyzes the conversion of dihydroorotate to orotate with quinone as electron acceptor. The polypeptide is Dihydroorotate dehydrogenase (quinone) (Bartonella tribocorum (strain CIP 105476 / IBS 506)).